The chain runs to 374 residues: MDPLGPAKPQWLWRRCLAGLLFQLLVAVCFFSYLRVSQDHATGSPRPGLMVVEPVTRAPNGSRCQDSAATPAHPTLLILLWTWPFNTPVALPRCSEMVPGAADCNITANSNVYPQADAVIVHHWDIMYNPSANLLPPTRPQGQRWIWFSMESPSNCRHLEALDGYFNLTMSYRSDSDIFTPYGWLEPWSGQPAHPPLNLSAKTELVAWAVSNWKPDSARVRYYQSLKAHLKVDVYGHSHKPLPKGTMMETLSRYKFYLAFENSLHLDYITEKLWRNALEAWAVPVVLGPSRGNYERFLPPDAFIHVDDFQSPKDLARYLQELDKDHARYLSYFRWRETLRPRSFSWALDFCKACWKLQQESRYQTVRSIAAWFT.

At 1 to 15 (MDPLGPAKPQWLWRR) the chain is on the cytoplasmic side. The chain crosses the membrane as a helical; Signal-anchor for type II membrane protein span at residues 16–34 (CLAGLLFQLLVAVCFFSYL). The Lumenal portion of the chain corresponds to 35 to 374 (RVSQDHATGS…TVRSIAAWFT (340 aa)). Residues Asn-60, Asn-105, Asn-167, and Asn-198 are each glycosylated (N-linked (GlcNAc...) asparagine).

The protein belongs to the glycosyltransferase 10 family.

The protein localises to the golgi apparatus. It localises to the golgi stack membrane. The catalysed reaction is a beta-D-galactosyl-(1-&gt;3)-N-acetyl-beta-D-glucosaminyl derivative + GDP-beta-L-fucose = a beta-D-galactosyl-(1-&gt;3)-[alpha-L-fucosyl-(1-&gt;4)]-N-acetyl-beta-D-glucosaminyl derivative + GDP + H(+). The enzyme catalyses an N-acetyl-alpha-neuraminyl-(2-&gt;3)-beta-D-galactosyl-(1-&gt;4)-N-acetyl-beta-D-glucosaminyl derivative + GDP-beta-L-fucose = an alpha-Neu5Ac-(2-&gt;3)-beta-D-Gal-(1-&gt;4)-[alpha-L-Fuc-(1-&gt;3)]-beta-D-GlcNAc derivative + GDP + H(+). It catalyses the reaction an alpha-Neu5Ac-(2-&gt;3)-beta-D-Gal-(1-&gt;4)-beta-D-GlcNAc-(1-&gt;3)-beta-D-Gal-(1-&gt;4)-[alpha-L-Fuc-(1-&gt;3)]-beta-D-GlcNAc derivative + GDP-beta-L-fucose = an alpha-Neu5Ac-(2-&gt;3)-beta-D-Gal-(1-&gt;4)-[alpha-L-Fuc-(1-&gt;3)]-beta-D-GlcNAc-(1-&gt;3)-beta-D-Gal-(1-&gt;4)-[alpha-L-Fuc-(1-&gt;3)]-beta-D-GlcNAc derivative + GDP + H(+). It carries out the reaction a beta-D-galactosyl-(1-&gt;4)-N-acetyl-beta-D-glucosaminyl derivative + GDP-beta-L-fucose = a beta-D-galactosyl-(1-&gt;4)-[alpha-L-fucosyl-(1-&gt;3)]-N-acetyl-beta-D-glucosaminyl derivative + GDP + H(+). The catalysed reaction is a neolactoside nLc4Cer + GDP-beta-L-fucose = a neolactoside III(3)-alpha-Fuc-nLc4Cer + GDP + H(+). The enzyme catalyses a neolactoside nLc6Cer + GDP-beta-L-fucose = beta-D-galactosyl-(1-&gt;4)-N-acetyl-beta-D-glucosaminyl-(1-&gt;3)-beta-D-galactosyl-(1-&gt;4)-[alpha-L-fucosyl-(1-&gt;3)]-N-acetyl-beta-D-glucosaminyl-(1-&gt;3)-beta-D-galactosyl-(1-&gt;4)-beta-D-glucosyl-(1&lt;-&gt;1')-ceramide + GDP + H(+). It catalyses the reaction a neolactoside nLc6Cer(d18:1(4E)) + GDP-beta-L-fucose = a neolactoside III(3)-alpha-Fuc-nLc6Cer(d18:1(4E)) + GDP + H(+). It carries out the reaction a neolactoside nLc4Cer(d18:1(4E)) + GDP-beta-L-fucose = a neolactoside III(3)-alpha-Fuc-nLc4Cer(d18:1(4E)) + GDP + H(+). The catalysed reaction is a neolactoside VI(3)-alpha-NeuNAc-nLc6Cer + GDP-beta-L-fucose = a neolactoside VI(3)-alpha-NeuAc,III(3)-alphaFuc-nLc6Cer + GDP + H(+). The enzyme catalyses beta-D-galactosyl-(1-&gt;4)-N-acetyl-D-glucosamine + GDP-beta-L-fucose = beta-D-galactosyl-(1-&gt;4)-[alpha-L-fucosyl-(1-&gt;3)]-N-acetyl-D-glucosamine + GDP + H(+). It catalyses the reaction N-acetyl-alpha-neuraminosyl-(2-&gt;3)-beta-D-galactosyl-(1-&gt;4)-N-acetyl-beta-D-glucosamine + GDP-beta-L-fucose = N-acetyl-alpha-neuraminosyl-(2-&gt;3)-beta-D-galactosyl-(1-&gt;4)-[alpha-L-fucosyl-(1-&gt;3)]-N-acetyl-beta-D-glucosamine + GDP + H(+). It carries out the reaction alpha-L-Fuc-(1-&gt;2)-beta-D-Gal-(1-&gt;4)-D-GlcNAc + GDP-beta-L-fucose = alpha-L-Fuc-(1-&gt;2)-beta-D-Gal-(1-&gt;4)-[alpha-L-Fuc-(1-&gt;3)]-D-GlcNAc + GDP + H(+). The catalysed reaction is an alpha-Neu5Ac-(2-&gt;3)-beta-D-Gal-(1-&gt;3)-D-GlcNAc derivative + GDP-beta-L-fucose = an alpha-Neu5Ac-(2-&gt;3)-beta-D-Gal-(1-&gt;3)-[alpha-L-Fuc-(1-&gt;4)]-beta-D-GlcNAc derivative + GDP + H(+). It participates in protein modification; protein glycosylation. Catalyzes preferentially the transfer of L-fucose, from a guanosine diphosphate-beta-L-fucose, to the N-acetyl-beta-D-glucosamine (GlcNAc) of an N-acetyllactosamine unit (type 2 chain) of an oligosaccharide, or a glycoprotein- and a glycolipid-linked N-acetyllactosamine unit via an alpha (1,3) linkage and participates in the surface expression of VIM-2, Lewis X/SSEA-1 and sialyl Lewis X antigens. Preferentially transfers fucose to the GlcNAc of an internal N-acetyllactosamine unit of a poly-N-acetyllactosamine chain acceptor substrate. Also catalyzes to a lesser extend the transfer of L-fucose to the GlcNAc of a type 1 (beta-D-galactosyl-(1-&gt;3)-N-acetyl-beta-D-glucosaminyl) or H-type 1 (alpha-L-Fuc-(1-&gt;2)-beta-D-Gal-(1-&gt;3)-D-GlcNAc) chain oligosaccharide via an alpha (1,4) linkage. Preferentially catalyzes sialylated type 2 oligosaccharide acceptors over neutral type 2 or H type 2 (alpha-L-Fuc-(1-&gt;2)-beta-D-Gal-(1-&gt;4)-D-GlcNAc) oligosaccharide acceptors. Lactose-based structures are also acceptor substrates. The sequence is that of 4-galactosyl-N-acetylglucosaminide 3-alpha-L-fucosyltransferase FUT5 from Gorilla gorilla gorilla (Western lowland gorilla).